Here is a 360-residue protein sequence, read N- to C-terminus: Aminomethyltransferase (360 aa).

Belongs to the GcvT family. In terms of assembly, the glycine cleavage system is composed of four proteins: P, T, L and H.

It catalyses the reaction N(6)-[(R)-S(8)-aminomethyldihydrolipoyl]-L-lysyl-[protein] + (6S)-5,6,7,8-tetrahydrofolate = N(6)-[(R)-dihydrolipoyl]-L-lysyl-[protein] + (6R)-5,10-methylene-5,6,7,8-tetrahydrofolate + NH4(+). Its function is as follows. The glycine cleavage system catalyzes the degradation of glycine. This is Aminomethyltransferase from Methylococcus capsulatus (strain ATCC 33009 / NCIMB 11132 / Bath).